Consider the following 517-residue polypeptide: Bifunctional purine biosynthesis protein PurH (517 aa).

One can recognise an MGS-like domain in the interval 1–145; that stretch reads MSPLALVSVS…KNHKDVSVLV (145 aa).

The protein belongs to the PurH family.

The catalysed reaction is (6R)-10-formyltetrahydrofolate + 5-amino-1-(5-phospho-beta-D-ribosyl)imidazole-4-carboxamide = 5-formamido-1-(5-phospho-D-ribosyl)imidazole-4-carboxamide + (6S)-5,6,7,8-tetrahydrofolate. It catalyses the reaction IMP + H2O = 5-formamido-1-(5-phospho-D-ribosyl)imidazole-4-carboxamide. It participates in purine metabolism; IMP biosynthesis via de novo pathway; 5-formamido-1-(5-phospho-D-ribosyl)imidazole-4-carboxamide from 5-amino-1-(5-phospho-D-ribosyl)imidazole-4-carboxamide (10-formyl THF route): step 1/1. Its pathway is purine metabolism; IMP biosynthesis via de novo pathway; IMP from 5-formamido-1-(5-phospho-D-ribosyl)imidazole-4-carboxamide: step 1/1. The sequence is that of Bifunctional purine biosynthesis protein PurH from Prochlorococcus marinus (strain AS9601).